We begin with the raw amino-acid sequence, 251 residues long: Sugar fermentation stimulation protein homolog (251 aa).

This sequence belongs to the SfsA family.

This is Sugar fermentation stimulation protein homolog from Symbiobacterium thermophilum (strain DSM 24528 / JCM 14929 / IAM 14863 / T).